The primary structure comprises 149 residues: Transcriptional regulator MraZ (149 aa).

SpoVT-AbrB domains lie at 6–52 (RSYR…TPED) and 81–124 (VEEL…SEEE).

It belongs to the MraZ family. In terms of assembly, forms oligomers.

It localises to the cytoplasm. The protein resides in the nucleoid. The protein is Transcriptional regulator MraZ of Oleidesulfovibrio alaskensis (strain ATCC BAA-1058 / DSM 17464 / G20) (Desulfovibrio alaskensis).